A 1599-amino-acid chain; its full sequence is MVAQASGKEVESDKSAKEKRKVTEASSDDPQPGIDLVRKESLTSSESFPTVECSEFQSMAFLQSLGKERLVEGIKRRIRIKKFKSLESPALKMTENKATQNSKVEFQDELYKNTLKYSCNSLSPGVENNSTLKLHDCSCLSHSKDCNDENNLAYKPDGGCMHVPENSSKSKKENPRSLIDKTDPSNIPQLLQTEENLMRVSQLLLEENDSYLSKNNGMFSCLQSEKNKHSIEESSIGRKSRKRMKVSEKGNGMVIEMKFSNMCNKSELMLQGNQTGAEGKETETLEAKKSSLKVLRKVNNNTLSPMDPLLSLPETGKKTSPEHYANAVFQKAVEQLSKEETKNVSQPLGCTSMDPPEDYFKSMKNSLVKSLSDCFPIEKRSSREGLKNEAEESKYSCHRTIPMTGKRTWPCYSCARISAQCWKKASLPQSSRQDDFLRHQMNQTHLSDSKLMLQSSVTETNSASSSIEKLDSNLNCLPSVSTVEPTSVVIKEPIVNDDEKMKSEELSRSASEVVSNITEDTPLTNVTHNSTGSKKKDRGNLTKLNLMVASQDGQEASNSTGKTVHRKACITKQALVVPDLVKILNTGRLTNFKIPLLKNKTEKRKEINAKSSEREVYSPLELLDSLSGAEVRQSRTKENTVTVTSGPQSLSIQHSVIPVQASSDSFCSKNSCIIAPSFLKQGNNNKPSSHISASGHIISNKAAGSLTVENNTFSCDPGCIEKNPTFYSNEQEPFKAVSSEVSGRKMSKNFSEIKVGFPDILKAYEDDVLLIDVIQDDPDLFGVSSEGELSFPSEVPLISQEPNVAEEHQSADSKHMELPEKKEPSDHLRELPVPDPGSVKSEICASLSAASEIKHDSKDANISLGEVTHETSSNEKPGGLSEQTKSSDLDEKCRFSDKVAIREEKETISEVFRSDSKNTEIMVGECHLAALVSKPLCLPVPLPPLNLSTHQEDTLLNPWMNDFRLPGKHSLLKLQNPEICEIFKREKNLGVFQKPLGLIIPHRYCKFHFNTIRGCERSQCKFAHVPEQGDEKVCMDVFKKYISISELCLLQRAANMFMEYYRKFLPGIHFDLQVLNDLLNSLLKHCLLKEVFQIMNLCIMIKMLPALKILLKIFEYVATMKLRNAVPALIDMFCKLVEAGMVLDLEHFNYIVKLLYQVQASKQEITAVLEMKSRLRMRQFKKNWKCDLEAALNEIEHCKEKGDWTKLGNVYLNIKMSCEKFADFQRFCAYIAEILTKDCKEERPGVPFCEFAETVSKDLQNSEVDKTLLGRIGISAMYFYHKLLQWSKGRKVLDKLYEKIHCTSLKGLIGPEKLAPRCQIVNIAAEIFLKSGSLDGAIWVLRESEWIINTPVWPCDRLDVLNRHNLLCTIAHEILAKSLYRQTFEVLQNLPGFQNSQETVEVSQYSLLFNKLLDACIESNSLGMSSSVAEFMISKSIPIDFSFLRRLITSLGRSCLWLKARAHYKSALSLGCYPPLEGNLYRKLLLIPSYLSEIEMLLAIEIFLVSNASSIQSPGTSTQMLQIVLKRSEENKSRSKDDYQAAVERLIMAARISDPKLFIKHMTVNVNKEQVYSLEHCSALKWLKENMKWGVKVWLFNNR.

4 disordered regions span residues 1 to 42 (MVAQ…KESL), 159 to 185 (GCMH…TDPS), 802 to 836 (PNVA…VPDP), and 867 to 889 (VTHE…SSDL). Composition is skewed to basic and acidic residues over residues 168 to 183 (SKSK…DKTD) and 805 to 832 (AEEH…RELP). Polar residues predominate over residues 874 to 884 (NEKPGGLSEQT).

Expressed in both adult testis and fetal ovary, mostly in germ cells (at protein level).

The protein localises to the cytoplasm. The protein resides in the cytosol. Functionally, important for normal spermatogenesis and male fertility. Specifically required for progression to the post-meiotic stages of spermatocyte development. Seems to be necessary for normal expression levels of a number of testis-expressed gene transcripts, although its role in this process is unclear. The sequence is that of Protein TOPAZ1 (TOPAZ1) from Ovis aries (Sheep).